Here is a 221-residue protein sequence, read N- to C-terminus: Thiopurine S-methyltransferase (221 aa).

S-adenosyl-L-methionine contacts are provided by W12, L47, E68, and R125.

This sequence belongs to the class I-like SAM-binding methyltransferase superfamily. TPMT family.

It localises to the cytoplasm. It carries out the reaction S-adenosyl-L-methionine + a thiopurine = S-adenosyl-L-homocysteine + a thiopurine S-methylether.. This is Thiopurine S-methyltransferase from Legionella pneumophila (strain Paris).